Reading from the N-terminus, the 247-residue chain is MSHRDTLFSAPIARLGDWTFDERVAEVFPDMIQRSVPGYSNIISMIGMLAERFVQPNTQVYDLGCSLGAATLSVRRNIRHEHCRIIAVDNSPAMIERCRRHIDAYKAPTPVEVVEGDIRDITIENASMVVLNFTLQFLEPAERQALLDKIYLGLNPGGALVLSEKFSFEDAKVGELLFNMHHDFKRANGYSELEISQKRSMLENVMLTDSVETHKARLRQAGFEHSELWFQCFNFGSLVALKAGVAA.

S-adenosyl-L-methionine contacts are provided by residues Y39, 64–66, 89–90, 117–118, N132, and R199; these read GCS, DN, and DI.

The protein belongs to the class I-like SAM-binding methyltransferase superfamily. Cx-SAM synthase family. As to quaternary structure, homodimer.

The enzyme catalyses prephenate + S-adenosyl-L-methionine = carboxy-S-adenosyl-L-methionine + 3-phenylpyruvate + H2O. Functionally, catalyzes the conversion of S-adenosyl-L-methionine (SAM) to carboxy-S-adenosyl-L-methionine (Cx-SAM). The sequence is that of Carboxy-S-adenosyl-L-methionine synthase from Salmonella agona (strain SL483).